Consider the following 775-residue polypeptide: Mitochondrial intermediate peptidase (775 aa).

The transit peptide at 1–28 (MIARPARDVLSSATKKQFRFRGCLAARH) directs the protein to the mitochondrion. Residue histidine 558 coordinates Zn(2+). Glutamate 559 is a catalytic residue. Zn(2+) contacts are provided by histidine 562 and histidine 565.

This sequence belongs to the peptidase M3 family. Zn(2+) serves as cofactor.

It localises to the mitochondrion matrix. The catalysed reaction is Release of an N-terminal octapeptide as second stage of processing of some proteins imported into the mitochondrion.. Its function is as follows. Cleaves proteins, imported into the mitochondrion, to their mature size. While most mitochondrial precursor proteins are processed to the mature form in one step by mitochondrial processing peptidase (MPP), the sequential cleavage by MIP of an octapeptide after initial processing by MPP is a required step for a subgroup of nuclear-encoded precursor proteins destined for the matrix or the inner membrane. In Schizophyllum commune (Split gill fungus), this protein is Mitochondrial intermediate peptidase (OCT1).